The chain runs to 194 residues: Large ribosomal subunit protein eL15 (194 aa).

Over residues 162 to 173 the composition is skewed to basic residues; it reads KTSAGRRARGLH. A disordered region spans residues 162-194; it reads KTSAGRRARGLHNRGTGTEKCRPSLTSHKNQGK. Residues 185 to 194 show a composition bias toward polar residues; it reads SLTSHKNQGK.

The protein belongs to the eukaryotic ribosomal protein eL15 family.

The chain is Large ribosomal subunit protein eL15 from Methanocorpusculum labreanum (strain ATCC 43576 / DSM 4855 / Z).